Reading from the N-terminus, the 467-residue chain is Glutamate--tRNA ligase (467 aa).

Residues 9–19 carry the 'HIGH' region motif; that stretch reads PSPTGYLHIGG. A 'KMSKS' region motif is present at residues 237–241; that stretch reads KLSKR. Lys240 lines the ATP pocket.

This sequence belongs to the class-I aminoacyl-tRNA synthetase family. Glutamate--tRNA ligase type 1 subfamily. Monomer.

Its subcellular location is the cytoplasm. It carries out the reaction tRNA(Glu) + L-glutamate + ATP = L-glutamyl-tRNA(Glu) + AMP + diphosphate. In terms of biological role, catalyzes the attachment of glutamate to tRNA(Glu) in a two-step reaction: glutamate is first activated by ATP to form Glu-AMP and then transferred to the acceptor end of tRNA(Glu). This is Glutamate--tRNA ligase from Xylella fastidiosa (strain 9a5c).